The sequence spans 184 residues: NADH-quinone oxidoreductase subunit B (184 aa).

[4Fe-4S] cluster contacts are provided by Cys-37, Cys-38, Cys-103, and Cys-132.

The protein belongs to the complex I 20 kDa subunit family. NDH-1 is composed of 14 different subunits. Subunits NuoB, C, D, E, F, and G constitute the peripheral sector of the complex. [4Fe-4S] cluster serves as cofactor.

The protein localises to the cell membrane. The catalysed reaction is a quinone + NADH + 5 H(+)(in) = a quinol + NAD(+) + 4 H(+)(out). Its function is as follows. NDH-1 shuttles electrons from NADH, via FMN and iron-sulfur (Fe-S) centers, to quinones in the respiratory chain. The immediate electron acceptor for the enzyme in this species is believed to be a menaquinone. Couples the redox reaction to proton translocation (for every two electrons transferred, four hydrogen ions are translocated across the cytoplasmic membrane), and thus conserves the redox energy in a proton gradient. This chain is NADH-quinone oxidoreductase subunit B, found in Nocardioides sp. (strain ATCC BAA-499 / JS614).